The following is a 292-amino-acid chain: 33 kDa chaperonin (292 aa).

2 cysteine pairs are disulfide-bonded: cysteine 230–cysteine 232 and cysteine 263–cysteine 266.

Belongs to the HSP33 family. Post-translationally, under oxidizing conditions two disulfide bonds are formed involving the reactive cysteines. Under reducing conditions zinc is bound to the reactive cysteines and the protein is inactive.

It is found in the cytoplasm. Its function is as follows. Redox regulated molecular chaperone. Protects both thermally unfolding and oxidatively damaged proteins from irreversible aggregation. Plays an important role in the bacterial defense system toward oxidative stress. The polypeptide is 33 kDa chaperonin (Salmonella paratyphi A (strain ATCC 9150 / SARB42)).